A 244-amino-acid chain; its full sequence is Protein-L-isoaspartate O-methyltransferase 2 (244 aa).

Ser-88 is an active-site residue.

The protein belongs to the methyltransferase superfamily. L-isoaspartyl/D-aspartyl protein methyltransferase family.

The protein resides in the cytoplasm. It catalyses the reaction [protein]-L-isoaspartate + S-adenosyl-L-methionine = [protein]-L-isoaspartate alpha-methyl ester + S-adenosyl-L-homocysteine. Its function is as follows. Catalyzes the methyl esterification of L-isoaspartyl residues in peptides and proteins that result from spontaneous decomposition of normal L-aspartyl and L-asparaginyl residues. It plays a role in the repair and/or degradation of damaged proteins. This chain is Protein-L-isoaspartate O-methyltransferase 2, found in Shewanella sediminis (strain HAW-EB3).